Here is a 158-residue protein sequence, read N- to C-terminus: Small ribosomal subunit protein uS9 (158 aa).

This sequence belongs to the universal ribosomal protein uS9 family.

This chain is Small ribosomal subunit protein uS9, found in Rhodopseudomonas palustris (strain HaA2).